A 547-amino-acid chain; its full sequence is Ribosomal lysine N-methyltransferase set10 (547 aa).

The 219-residue stretch at 17-235 (KSVEFIQSRD…KGNQLFNNYG (219 aa)) folds into the SET domain. Tyrosine 234 contacts S-adenosyl-L-methionine.

Belongs to the class V-like SAM-binding methyltransferase superfamily. RKM1 family.

The protein resides in the cytoplasm. It localises to the nucleus. In terms of biological role, S-adenosyl-L-methionine-dependent protein-lysine N-methyltransferase that methylates ribosomal protein L23 (rpl23a and rpl23b). The chain is Ribosomal lysine N-methyltransferase set10 (set10) from Schizosaccharomyces pombe (strain 972 / ATCC 24843) (Fission yeast).